Consider the following 428-residue polypeptide: GTPase Obg (428 aa).

The Obg domain maps to 1–158 (MFVDQVQVEV…RFIKLELKVL (158 aa)). The OBG-type G domain occupies 159–333 (ADVGLVGFPS…LMHKTAEVLK (175 aa)). GTP-binding positions include 165–172 (GFPSVGKS), 190–194 (FTTLV), 212–215 (DLPG), 282–285 (TKMD), and 314–316 (SSL). Residues S172 and T192 each coordinate Mg(2+). Residues 350–428 (YKYQPEPALK…IDDFTFEFVE (79 aa)) form the OCT domain.

This sequence belongs to the TRAFAC class OBG-HflX-like GTPase superfamily. OBG GTPase family. In terms of assembly, monomer. The cofactor is Mg(2+).

It is found in the cytoplasm. An essential GTPase which binds GTP, GDP and possibly (p)ppGpp with moderate affinity, with high nucleotide exchange rates and a fairly low GTP hydrolysis rate. Plays a role in control of the cell cycle, stress response, ribosome biogenesis and in those bacteria that undergo differentiation, in morphogenesis control. The chain is GTPase Obg from Lacticaseibacillus casei (strain BL23) (Lactobacillus casei).